Here is a 42-residue protein sequence, read N- to C-terminus: Serine protease inhibitor 8 (42 aa).

Belongs to the protease inhibitor I3 (leguminous Kunitz-type inhibitor) family. In terms of tissue distribution, cortex of potato tuber.

Potent inhibitor of animal pancreatic trypsin (serine protease). The protein is Serine protease inhibitor 8 of Solanum tuberosum (Potato).